A 163-amino-acid chain; its full sequence is Phospholipase A2 homolog 3 (163 aa).

The signal sequence occupies residues methionine 1–glutamine 43. 6 disulfide bridges follow: cysteine 55-cysteine 83, cysteine 59-cysteine 89, cysteine 64-cysteine 137, cysteine 76-cysteine 96, cysteine 95-cysteine 121, and cysteine 102-cysteine 114. Positions 75, 77, and 80 each coordinate Ca(2+). Histidine 99 is a catalytic residue. Aspartate 100 is a Ca(2+) binding site.

The protein belongs to the phospholipase A2 family. Requires Ca(2+) as cofactor.

It localises to the secreted. The catalysed reaction is a 1,2-diacyl-sn-glycero-3-phosphocholine + H2O = a 1-acyl-sn-glycero-3-phosphocholine + a fatty acid + H(+). With respect to regulation, inhibited by EGTA. PA2 catalyzes the calcium-dependent hydrolysis of the 2-acyl groups in 3-sn-phosphoglycerides. Releases lysophospholipids (LPLs) and free fatty acids (FFAs) from membrane phospholipids in response to hormones and other external stimuli. The sequence is that of Phospholipase A2 homolog 3 (PLA2-III) from Oryza sativa subsp. japonica (Rice).